The chain runs to 164 residues: uncharacterized protein (164 aa).

Positions 107 to 136 (QSESGGSGSNSRSSSDTTEPTDPPAPVRKT) are disordered.

This is an uncharacterized protein from Escherichia coli (Bacteriophage T4).